A 438-amino-acid polypeptide reads, in one-letter code: MICFDNSTAHTDSNNNNNQCDLPENYKELVTTGKVEKLILSPSSSLDRPKTLPPKSQEEVLKHQREYEEIQRKAKKTLEREAKEKEKLDAIRKEKERSLIDARKVWEEDIIPVWEKNSKKRDIKKIKDLSWRGLPPAVRGKIWRLCIGNDLRVTDELFNIFLGHANNAYNKTTSPPLKSSLSSSSKSPNINIDLRQANNSIHHSRSPMNTSTDGEDDVLDLETTNMALILQDIQDTFPSLMIFQKGGPLHSDLIDVLGAYICYRPDIGYVPGMTFLAAMFLLNMEKCDAFLSLSNHINSVCFLPFFRQDQSGIPKYLAAMDSTVEALTPPLHKHFKEIGISAKNYLVDWITTLFSKALPLDVATRIWDLVFIEGEIFIYRTALSILRYFISDLIQATYDECIDLFNKLPQRKISEDKLFEEIQSIVLDQRKFDKLLEK.

A coiled-coil region spans residues 54–104 (PKSQEEVLKHQREYEEIQRKAKKTLEREAKEKEKLDAIRKEKERSLIDARK). One can recognise a Rab-GAP TBC domain in the interval 133–374 (GLPPAVRGKI…RIWDLVFIEG (242 aa)).

It localises to the contractile vacuole membrane. The protein localises to the cytoplasm. Functionally, may act as a GTPase-activating protein for Rab family protein(s). Required for osmotic regulation by the contractile vacuole in hypo-osmotic environments. Essential for periodic fusion of the contractile vacuole with the plasma membrane and consequent expulsion of water from the cell body. This Dictyostelium discoideum (Social amoeba) protein is Drainin (phgA).